Here is a 166-residue protein sequence, read N- to C-terminus: RING-H2 finger protein ATL79 (166 aa).

The signal sequence occupies residues 1–16; the sequence is MRLLVAEAASPLSSAA. The helical transmembrane segment at 41–61 threads the bilayer; sequence SVLLILVISALICALSLYAAI. Residues 71 to 90 form a disordered region; the sequence is TEDDHKPDPEAAASSTPTTP. Over residues 81-90 the composition is skewed to low complexity; it reads AAASSTPTTP. The RING-type; atypical zinc-finger motif lies at 107 to 149; sequence CAICLSEFEQGESIQVLEKCQHGFHVKCIHKWLSTRSSCPTCR.

The protein belongs to the RING-type zinc finger family. ATL subfamily.

The protein resides in the membrane. The catalysed reaction is S-ubiquitinyl-[E2 ubiquitin-conjugating enzyme]-L-cysteine + [acceptor protein]-L-lysine = [E2 ubiquitin-conjugating enzyme]-L-cysteine + N(6)-ubiquitinyl-[acceptor protein]-L-lysine.. It functions in the pathway protein modification; protein ubiquitination. The chain is RING-H2 finger protein ATL79 (ATL79) from Arabidopsis thaliana (Mouse-ear cress).